Reading from the N-terminus, the 393-residue chain is 1-deoxy-D-xylulose 5-phosphate reductoisomerase (393 aa).

NADPH contacts are provided by threonine 10, glycine 11, serine 12, isoleucine 13, arginine 37, and asparagine 124. Lysine 125 lines the 1-deoxy-D-xylulose 5-phosphate pocket. NADPH is bound at residue glutamate 126. Residue aspartate 150 coordinates Mn(2+). 1-deoxy-D-xylulose 5-phosphate contacts are provided by serine 151, glutamate 152, serine 182, and histidine 205. Residue glutamate 152 coordinates Mn(2+). Glycine 211 provides a ligand contact to NADPH. The 1-deoxy-D-xylulose 5-phosphate site is built by serine 218, asparagine 223, lysine 224, and glutamate 227. Glutamate 227 provides a ligand contact to Mn(2+).

It belongs to the DXR family. Mg(2+) serves as cofactor. Mn(2+) is required as a cofactor.

It carries out the reaction 2-C-methyl-D-erythritol 4-phosphate + NADP(+) = 1-deoxy-D-xylulose 5-phosphate + NADPH + H(+). Its pathway is isoprenoid biosynthesis; isopentenyl diphosphate biosynthesis via DXP pathway; isopentenyl diphosphate from 1-deoxy-D-xylulose 5-phosphate: step 1/6. Catalyzes the NADPH-dependent rearrangement and reduction of 1-deoxy-D-xylulose-5-phosphate (DXP) to 2-C-methyl-D-erythritol 4-phosphate (MEP). In Nitrosococcus oceani (strain ATCC 19707 / BCRC 17464 / JCM 30415 / NCIMB 11848 / C-107), this protein is 1-deoxy-D-xylulose 5-phosphate reductoisomerase.